The chain runs to 428 residues: Enolase (428 aa).

Q163 provides a ligand contact to (2R)-2-phosphoglycerate. Catalysis depends on E205, which acts as the Proton donor. 3 residues coordinate Mg(2+): D242, E285, and D312. 4 residues coordinate (2R)-2-phosphoglycerate: K337, R366, S367, and K388. K337 functions as the Proton acceptor in the catalytic mechanism.

It belongs to the enolase family. As to quaternary structure, component of the RNA degradosome, a multiprotein complex involved in RNA processing and mRNA degradation. It depends on Mg(2+) as a cofactor.

It localises to the cytoplasm. It is found in the secreted. Its subcellular location is the cell surface. The enzyme catalyses (2R)-2-phosphoglycerate = phosphoenolpyruvate + H2O. Its pathway is carbohydrate degradation; glycolysis; pyruvate from D-glyceraldehyde 3-phosphate: step 4/5. Its function is as follows. Catalyzes the reversible conversion of 2-phosphoglycerate (2-PG) into phosphoenolpyruvate (PEP). It is essential for the degradation of carbohydrates via glycolysis. This is Enolase from Halorhodospira halophila (strain DSM 244 / SL1) (Ectothiorhodospira halophila (strain DSM 244 / SL1)).